The chain runs to 110 residues: U1-lycotoxin-Ls1gg (110 aa).

An N-terminal signal peptide occupies residues methionine 1–alanine 20. Residues glutamate 21–arginine 44 constitute a propeptide that is removed on maturation. Disulfide bonds link cysteine 54–cysteine 71, cysteine 61–cysteine 89, and cysteine 73–cysteine 87.

The protein belongs to the neurotoxin 19 (CSTX) family. 03 subfamily. Expressed by the venom gland.

Its subcellular location is the secreted. The protein is U1-lycotoxin-Ls1gg of Lycosa singoriensis (Wolf spider).